The following is a 691-amino-acid chain: Alpha-1,4-glucan:maltose-1-phosphate maltosyltransferase (691 aa).

Positions 280, 341, and 376 each coordinate alpha-maltose 1-phosphate. Catalysis depends on D411, which acts as the Nucleophile. N412 contacts alpha-maltose 1-phosphate. E440 functions as the Proton donor in the catalytic mechanism. Residue 550–551 (KY) participates in alpha-maltose 1-phosphate binding.

The protein belongs to the glycosyl hydrolase 13 family. GlgE subfamily. As to quaternary structure, homodimer.

The catalysed reaction is alpha-maltose 1-phosphate + [(1-&gt;4)-alpha-D-glucosyl](n) = [(1-&gt;4)-alpha-D-glucosyl](n+2) + phosphate. Functionally, maltosyltransferase that uses maltose 1-phosphate (M1P) as the sugar donor to elongate linear or branched alpha-(1-&gt;4)-glucans. Is involved in a branched alpha-glucan biosynthetic pathway from trehalose, together with TreS, Mak and GlgB. This Arcanobacterium haemolyticum (strain ATCC 9345 / DSM 20595 / CCM 5947 / CCUG 17215 / LMG 16163 / NBRC 15585 / NCTC 8452 / 11018) protein is Alpha-1,4-glucan:maltose-1-phosphate maltosyltransferase.